A 147-amino-acid chain; its full sequence is Hemoglobin subunit delta (147 aa).

Positions His-3–His-147 constitute a Globin domain. Ser-51 carries the post-translational modification Phosphoserine. Residues His-64 and His-93 each contribute to the heme b site.

The protein belongs to the globin family. Heterotetramer of two delta chains and two alpha chains. In terms of tissue distribution, red blood cells.

In Gorilla gorilla gorilla (Western lowland gorilla), this protein is Hemoglobin subunit delta (HBD).